The primary structure comprises 187 residues: Putative manganese efflux pump MntP (187 aa).

6 helical membrane-spanning segments follow: residues 8–28 (FLSIGLAIDAFAVSLSSGFII), 39–59 (IALFFGIFQGVMPLIGWLTGL), 65–85 (LANFDHWIAFILLAAIGGKMI), 106–126 (LFALAIATSIDALAAGLGLSV), 131–151 (ILLACTLIASITFSLSFIGVF), and 166–186 (ILGGITLIGIGTKILVEGLII).

Belongs to the MntP (TC 9.B.29) family.

Its subcellular location is the cell inner membrane. Functionally, probably functions as a manganese efflux pump. This chain is Putative manganese efflux pump MntP, found in Rippkaea orientalis (strain PCC 8801 / RF-1) (Cyanothece sp. (strain PCC 8801)).